The following is a 387-amino-acid chain: Palmitoyltransferase ZDHHC16A (387 aa).

2 helical membrane passes run 73–93 (WFGMVFVFLVVALTSSVVFIA) and 106–126 (SPGWMIWHICYGHWNLVMIVF). In terms of domain architecture, DHHC spans 150-200 (SVCKKCIIPKPARSHHCGICKTCILKMDHHCPWLNNCVGHFNHRYFFSFCL). Residue Cys-180 is the S-palmitoyl cysteine intermediate of the active site. The next 3 helical transmembrane spans lie at 198–218 (FCLFLTLGCMYCSVSGRHLFI), 236–256 (GVPVTGIGLLIGIVPSAGVAG), and 281–301 (VIYMWVLTSTVSVALGALTLW).

It belongs to the DHHC palmitoyltransferase family. Expressed in the central nervous system (CNS). Expressed in the developing forebrain, and especially in the telencephalon.

Its subcellular location is the endoplasmic reticulum membrane. The enzyme catalyses L-cysteinyl-[protein] + hexadecanoyl-CoA = S-hexadecanoyl-L-cysteinyl-[protein] + CoA. Functionally, palmitoyl acyltransferase that mediates palmitoylation of proteins and is required during embryonic heart development. Involved in the proliferation of neural stem cells by regulating the FGF/ERK pathway. Involved in the proliferation of neural stem cells by regulating the FGF/ERK pathway. The sequence is that of Palmitoyltransferase ZDHHC16A from Danio rerio (Zebrafish).